The following is a 275-amino-acid chain: Ribosomal RNA small subunit methyltransferase A (275 aa).

Residues N19, L21, G46, E71, D94, and N117 each contribute to the S-adenosyl-L-methionine site.

This sequence belongs to the class I-like SAM-binding methyltransferase superfamily. rRNA adenine N(6)-methyltransferase family. RsmA subfamily.

It localises to the cytoplasm. It carries out the reaction adenosine(1518)/adenosine(1519) in 16S rRNA + 4 S-adenosyl-L-methionine = N(6)-dimethyladenosine(1518)/N(6)-dimethyladenosine(1519) in 16S rRNA + 4 S-adenosyl-L-homocysteine + 4 H(+). Specifically dimethylates two adjacent adenosines (A1518 and A1519) in the loop of a conserved hairpin near the 3'-end of 16S rRNA in the 30S particle. May play a critical role in biogenesis of 30S subunits. The chain is Ribosomal RNA small subunit methyltransferase A from Burkholderia multivorans (strain ATCC 17616 / 249).